We begin with the raw amino-acid sequence, 361 residues long: Feruloyl CoA ortho-hydroxylase 2 (361 aa).

The region spanning 211–312 is the Fe2OG dioxygenase domain; that stretch reads GSTRINLNYY…RISVPIFVSP (102 aa). 2-oxoglutarate is bound at residue tyrosine 220. Fe cation-binding residues include histidine 235, aspartate 237, and histidine 293. 2-oxoglutarate is bound by residues arginine 303 and serine 305.

This sequence belongs to the iron/ascorbate-dependent oxidoreductase family. L-ascorbate serves as cofactor. It depends on Fe(2+) as a cofactor. In terms of tissue distribution, low expression in roots.

It carries out the reaction (E)-feruloyl-CoA + 2-oxoglutarate + O2 = (E)-6-hydroxyferuloyl-CoA + succinate + CO2. It catalyses the reaction (E)-6-hydroxyferuloyl-CoA = scopoletin + CoA. 2-oxoglutarate (OG)- and Fe(II)-dependent dioxygenase (2OGD)involved in scopoletin biosynthesis. Converts feruloyl CoA into 6'-hydroxyferuloyl CoA but has no activity with ferulic acid, feruloylquinic acid, caffeic acid, caffeoyl CoA, p-coumaric acid, cinnamic acid, cinnamoyl CoA or benzoyl CoA. The polypeptide is Feruloyl CoA ortho-hydroxylase 2 (Arabidopsis thaliana (Mouse-ear cress)).